Reading from the N-terminus, the 100-residue chain is MASQSLIQREQKRKKLEQKYHLIRRSLKKEISKVTSLNEKWEIHGKLQSPPRNSAPTRLHRRCFLTGRPRANYRDFGLSGHILREMVHTCLLPGATRSSW.

This sequence belongs to the universal ribosomal protein uS14 family. In terms of assembly, part of the 30S ribosomal subunit.

Its subcellular location is the plastid. It localises to the chloroplast. In terms of biological role, binds 16S rRNA, required for the assembly of 30S particles. The chain is Small ribosomal subunit protein uS14c from Fagopyrum esculentum subsp. ancestrale (Wild buckwheat).